The primary structure comprises 270 residues: Protein ABHD14A (270 aa).

A helical; Signal-anchor for type II membrane protein transmembrane segment spans residues 9-29 (LVVLGLVLLATVLLYLLLPSM). Asn-61 carries N-linked (GlcNAc...) asparagine glycosylation. Residues Ser-170 and Asp-221 each act as charge relay system in the active site. An N-linked (GlcNAc...) asparagine glycan is attached at Asn-237. The Charge relay system role is filled by His-248.

It belongs to the AB hydrolase superfamily. ABHD14 family.

The protein localises to the cytoplasm. It is found in the membrane. Its function is as follows. Possible role in granule neuron development. This is Protein ABHD14A from Danio rerio (Zebrafish).